The sequence spans 128 residues: Small ribosomal subunit protein uS9c (128 aa).

Positions 106-128 are disordered; the sequence is SRIKERKKYGLKKARKAPQFSKR. Positions 109 to 128 are enriched in basic residues; it reads KERKKYGLKKARKAPQFSKR.

This sequence belongs to the universal ribosomal protein uS9 family.

It localises to the plastid. It is found in the chloroplast. The protein is Small ribosomal subunit protein uS9c (rps9) of Cyanidium caldarium (Red alga).